A 212-amino-acid chain; its full sequence is 2-hydroxychromene-2-carboxylate isomerase (212 aa).

The Nucleophile role is filled by S24. A glutathione-binding site is contributed by S24. Substrate-binding positions include K56, N66–R67, and Y97. Glutathione contacts are provided by residues V181 and W192–D195.

This sequence belongs to the GST superfamily. NadH family. Requires glutathione as cofactor.

The enzyme catalyses 2-hydroxychromene-2-carboxylate = (3E)-4-(2-hydroxyphenyl)-2-oxobut-3-enoate. The protein operates within aromatic compound metabolism; naphthalene degradation. Its function is as follows. Involved in the naphthalene catabolic pathway. Catalyzes the reversible glutathione-dependent isomerization of 2-hydroxychromene-2-carboxylate (HCCA) to trans-O-hydroxybenzylidenepyruvate (THBPA). The polypeptide is 2-hydroxychromene-2-carboxylate isomerase (doxJ) (Pseudomonas sp. (strain C18)).